Here is a 595-residue protein sequence, read N- to C-terminus: Threonine dehydratase 2 biosynthetic, chloroplastic (595 aa).

A chloroplast-targeting transit peptide spans 1–51 (MEFLCLAPTRSFSTNPKLTKSIPSDHTSTTSRIFTYQNMRGSTMRPLALPL). N6-(pyridoxal phosphate)lysine is present on lysine 143. 2 ACT-like domains span residues 420–492 (ALLA…NLSH) and 514–585 (IFGE…LDNY).

It belongs to the serine/threonine dehydratase family. In terms of assembly, homotetramer. The cofactor is pyridoxal 5'-phosphate. Proteolytically cleaved by a chymotrypsin-like digestive protease in the midgut of the lepidopteran insects to remove the C-terminal regulatory domain, which allows efficient metabolizing of threonine in the presence of high isoleucine levels in the gut. In terms of tissue distribution, expressed in floral buds, 8-9 mm long flowers 1 to 2 days before anthesis, open flowers and floral organs including sepals, petals, stamens and carpels of 8-9 mm flowers (at protein level). Expressed in very early floral meristems of the anantha. Over 500-fold expression in mature flowers compared to leaves. Expressed in sepals, petals, stamens and carpels of the mature flower. In sepals, mostly expressed in the abaxial mesophyll cells and in petals in parenchymal cells. Not expressed in epidermal or vascular tissues of sepals and petals. In stamens, expressed in parenchymal cells of the connective and lobes, but not expressed in differentiated tissues such as tapetum (TP), stomium (SM), or pollen grains (PG). Not expressed in roots or seeds. High level of expression in immature flower buds, unopened flowers and opened flowers. Not expressed in unstressed leaves, root, stem or petiole.

The protein resides in the plastid. The protein localises to the chloroplast. It catalyses the reaction L-threonine = 2-oxobutanoate + NH4(+). It carries out the reaction L-serine = pyruvate + NH4(+). It functions in the pathway amino-acid biosynthesis; L-isoleucine biosynthesis; 2-oxobutanoate from L-threonine: step 1/1. Its activity is regulated as follows. Threonine dehydratase 2 biosynthetic, chloroplastic: Strongly inhibited by 1 mM isoleucine. Processed threonine dehydratase 2: Not inhibited by isoleucine. In terms of biological role, not required for normal growth and development of the plant. Functionally, involved in defense against lepidopteran, but not coleopteran herbivore insects. Acts in the insect gut to degrade threonine, which is an essential and limiting nutrient for the growth of lepidopteran larvae. Active against both L-threonine and L-serine. In Solanum lycopersicum (Tomato), this protein is Threonine dehydratase 2 biosynthetic, chloroplastic.